The following is a 347-amino-acid chain: NADH-ubiquinone oxidoreductase chain 2 (347 aa).

Transmembrane regions (helical) follow at residues 1–21 (MNPM…SIVM), 25–45 (HWFL…PVLM), 60–80 (FLTQ…NLMF), 96–116 (MLLT…FWVP), 127–147 (GLIL…QIYP), 149–169 (INTN…GWGG), 178–198 (IMAY…IYNP), 202–222 (LLNL…LIFA), 239–259 (IITI…PLTG), 274–294 (NSVI…FFYM), and 326–346 (MMPL…FILL).

This sequence belongs to the complex I subunit 2 family. As to quaternary structure, core subunit of respiratory chain NADH dehydrogenase (Complex I) which is composed of 45 different subunits. Interacts with TMEM242.

It localises to the mitochondrion inner membrane. The catalysed reaction is a ubiquinone + NADH + 5 H(+)(in) = a ubiquinol + NAD(+) + 4 H(+)(out). Core subunit of the mitochondrial membrane respiratory chain NADH dehydrogenase (Complex I) that is believed to belong to the minimal assembly required for catalysis. Complex I functions in the transfer of electrons from NADH to the respiratory chain. The immediate electron acceptor for the enzyme is believed to be ubiquinone. In Suncus etruscus (Etruscan shrew), this protein is NADH-ubiquinone oxidoreductase chain 2.